A 406-amino-acid chain; its full sequence is Cysteine desulfurase (406 aa).

An N6-(pyridoxal phosphate)lysine modification is found at Lys-226. The active-site Cysteine persulfide intermediate is the Cys-364.

It belongs to the class-V pyridoxal-phosphate-dependent aminotransferase family. Csd subfamily. Homodimer. Interacts with SufE and the SufBCD complex composed of SufB, SufC and SufD. The interaction with SufE is required to mediate the direct transfer of the sulfur atom from the S-sulfanylcysteine. Pyridoxal 5'-phosphate is required as a cofactor.

The protein localises to the cytoplasm. The catalysed reaction is (sulfur carrier)-H + L-cysteine = (sulfur carrier)-SH + L-alanine. The enzyme catalyses L-selenocysteine + AH2 = hydrogenselenide + L-alanine + A + H(+). It participates in cofactor biosynthesis; iron-sulfur cluster biosynthesis. In terms of biological role, cysteine desulfurases mobilize the sulfur from L-cysteine to yield L-alanine, an essential step in sulfur metabolism for biosynthesis of a variety of sulfur-containing biomolecules. Component of the suf operon, which is activated and required under specific conditions such as oxidative stress and iron limitation. Acts as a potent selenocysteine lyase in vitro, that mobilizes selenium from L-selenocysteine. Selenocysteine lyase activity is however unsure in vivo. The chain is Cysteine desulfurase from Salmonella agona (strain SL483).